A 463-amino-acid polypeptide reads, in one-letter code: Probable glucan endo-1,3-beta-glucosidase eglC (463 aa).

The N-terminal stretch at Met1–Ala18 is a signal peptide. Asn84 carries an N-linked (GlcNAc...) asparagine glycan. The active-site Proton donor is Glu128. Residue Asn183 is glycosylated (N-linked (GlcNAc...) asparagine). Glu239 functions as the Nucleophile in the catalytic mechanism. The N-linked (GlcNAc...) asparagine glycan is linked to Asn312. 2 disordered regions span residues Ser317–Val354 and Ser396–Ala430. Gly440 carries the GPI-anchor amidated glycine lipid modification. Positions Gly441–Leu463 are cleaved as a propeptide — removed in mature form.

The protein belongs to the glycosyl hydrolase 17 family. In terms of processing, the GPI-anchor is attached to the protein in the endoplasmic reticulum and serves to target the protein to the cell surface. There, the glucosamine-inositol phospholipid moiety is cleaved off and the GPI-modified mannoprotein is covalently attached via its lipidless GPI glycan remnant to the 1,6-beta-glucan of the outer cell wall layer.

The protein localises to the cell membrane. It is found in the secreted. The protein resides in the cell wall. The enzyme catalyses Hydrolysis of (1-&gt;3)-beta-D-glucosidic linkages in (1-&gt;3)-beta-D-glucans.. Functionally, glucanases play a role in cell expansion during growth, in cell-cell fusion during mating, and in spore release during sporulation. This enzyme may be involved in beta-glucan degradation and also function biosynthetically as a transglycosylase. In Aspergillus oryzae (strain ATCC 42149 / RIB 40) (Yellow koji mold), this protein is Probable glucan endo-1,3-beta-glucosidase eglC (eglC).